The chain runs to 505 residues: ATP synthase subunit alpha (505 aa).

The segment at 118-138 is disordered; sequence VDGLGPINTTNTRPIESPAPG. 172–179 contributes to the ATP binding site; sequence GDRQTGKT.

This sequence belongs to the ATPase alpha/beta chains family. In terms of assembly, F-type ATPases have 2 components, CF(1) - the catalytic core - and CF(0) - the membrane proton channel. CF(1) has five subunits: alpha(3), beta(3), gamma(1), delta(1), epsilon(1). CF(0) has three main subunits: a(1), b(2) and c(9-12). The alpha and beta chains form an alternating ring which encloses part of the gamma chain. CF(1) is attached to CF(0) by a central stalk formed by the gamma and epsilon chains, while a peripheral stalk is formed by the delta and b chains.

The protein localises to the cell membrane. It carries out the reaction ATP + H2O + 4 H(+)(in) = ADP + phosphate + 5 H(+)(out). In terms of biological role, produces ATP from ADP in the presence of a proton gradient across the membrane. The alpha chain is a regulatory subunit. The sequence is that of ATP synthase subunit alpha from Bacillus cereus (strain ATCC 14579 / DSM 31 / CCUG 7414 / JCM 2152 / NBRC 15305 / NCIMB 9373 / NCTC 2599 / NRRL B-3711).